We begin with the raw amino-acid sequence, 86 residues long: Large ribosomal subunit protein bL31B (86 aa).

The protein belongs to the bacterial ribosomal protein bL31 family. Type B subfamily. In terms of assembly, part of the 50S ribosomal subunit.

The protein is Large ribosomal subunit protein bL31B of Cupriavidus pinatubonensis (strain JMP 134 / LMG 1197) (Cupriavidus necator (strain JMP 134)).